Reading from the N-terminus, the 295-residue chain is Manganese transport system membrane protein MntD (295 aa).

Transmembrane regions (helical) follow at residues 7 to 27 (IIAT…FLVL), 42 to 62 (LLGI…YMFI), 63 to 83 (GAAA…SKGV), 87 to 107 (AAIG…LSVY), 138 to 158 (IGPK…VLIS), 174 to 194 (ALAL…MLSL), 203 to 223 (VGAV…HLLT), 227 to 247 (LYML…GYFF), and 253 to 273 (VSIS…AFLF).

Belongs to the ABC-3 integral membrane protein family. The complex is probably composed of two ATP-binding proteins (MntB), two transmembrane proteins (MntC and MntD) and a solute-binding protein (MntA).

It is found in the cell membrane. In terms of biological role, probably part of the ABC transporter complex MntABCD involved in manganese import. Probably responsible for the translocation of the substrate across the membrane. This is Manganese transport system membrane protein MntD from Bacillus subtilis (strain 168).